A 634-amino-acid polypeptide reads, in one-letter code: Beta-ketoacyl-[acyl-carrier-protein] synthase FabY (634 aa).

One can recognise a Ketosynthase family 3 (KS3) domain in the interval 78 to 546 (ERIFASTLVR…GNNASGVVLS (469 aa)). Residues C281, H434, and H472 each act as for beta-ketoacyl synthase activity in the active site.

Belongs to the thiolase-like superfamily. Beta-ketoacyl-ACP synthases family. Homodimer.

It catalyses the reaction malonyl-[ACP] + acetyl-CoA + H(+) = 3-oxobutanoyl-[ACP] + CO2 + CoA. It participates in lipid metabolism; fatty acid biosynthesis. Involved in the initiation of the fatty acid biosynthesis. Catalyzes the condensation of acetyl coenzyme A (acetyl-CoA) with malonyl-acyl carrier protein (ACP) to make the fatty acid synthesis (FAS) primer beta-acetoacetyl-ACP. It can also use short-chain acyl-CoA as substrates, including butyryl-CoA, and hexanoyl-CoA, but does not use any of the longer chain acyl-CoA substrates. The polypeptide is Beta-ketoacyl-[acyl-carrier-protein] synthase FabY (fabY) (Pseudomonas aeruginosa (strain ATCC 15692 / DSM 22644 / CIP 104116 / JCM 14847 / LMG 12228 / 1C / PRS 101 / PAO1)).